The primary structure comprises 173 residues: Large ribosomal subunit protein uL16 (173 aa).

The protein belongs to the universal ribosomal protein uL16 family.

The sequence is that of Large ribosomal subunit protein uL16 from Methanococcus maripaludis (strain C6 / ATCC BAA-1332).